The sequence spans 206 residues: ATP synthase subunit b (206 aa).

A helical transmembrane segment spans residues 10-30; it reads LLKPFVSTAAICLLVAGTVVL.

The protein belongs to the ATPase B chain family. As to quaternary structure, F-type ATPases have 2 components, F(1) - the catalytic core - and F(0) - the membrane proton channel. F(1) has five subunits: alpha(3), beta(3), gamma(1), delta(1), epsilon(1). F(0) has three main subunits: a(1), b(2) and c(10-14). The alpha and beta chains form an alternating ring which encloses part of the gamma chain. F(1) is attached to F(0) by a central stalk formed by the gamma and epsilon chains, while a peripheral stalk is formed by the delta and b chains.

It localises to the cell inner membrane. F(1)F(0) ATP synthase produces ATP from ADP in the presence of a proton or sodium gradient. F-type ATPases consist of two structural domains, F(1) containing the extramembraneous catalytic core and F(0) containing the membrane proton channel, linked together by a central stalk and a peripheral stalk. During catalysis, ATP synthesis in the catalytic domain of F(1) is coupled via a rotary mechanism of the central stalk subunits to proton translocation. Functionally, component of the F(0) channel, it forms part of the peripheral stalk, linking F(1) to F(0). The polypeptide is ATP synthase subunit b (Geobacter sulfurreducens (strain ATCC 51573 / DSM 12127 / PCA)).